A 391-amino-acid chain; its full sequence is Secreted aspartic protease 1 (391 aa).

The N-terminal stretch at 1–18 (MFLKNIFIALAIALLVDA) is a signal peptide. Residues 19–50 (SPAKRSPGFVTLDFDVIKTPVNATGQEGKVKR) constitute a propeptide, activation peptide. A glycan (N-linked (GlcNAc...) asparagine) is linked at N40. Residues 64-377 (YAADITIGSN…DLDDDKISLA (314 aa)) form the Peptidase A1 domain. D82 is an active-site residue. 82-84 (DTG) serves as a coordination point for pepstatin A. An intrachain disulfide couples C97 to C109. 135 to 136 (GD) serves as a coordination point for pepstatin A. Residues D241 and D263 each coordinate Zn(2+). D267 is an active-site residue. Pepstatin A is bound at residue 267–271 (DSGTT). An intrachain disulfide couples C305 to C343.

Belongs to the peptidase A1 family. In terms of assembly, monomer.

It is found in the secreted. It carries out the reaction Preferential cleavage at the carboxyl of hydrophobic amino acids, but fails to cleave 15-Leu-|-Tyr-16, 16-Tyr-|-Leu-17 and 24-Phe-|-Phe-25 of insulin B chain. Activates trypsinogen, and degrades keratin.. Inhibited by pepstatin A analogs and squash aspartic peptidase inhibitor (SQAPI). Functionally, secreted aspartic peptidases (SAPs) are a group of ten acidic hydrolases considered as key virulence factors. These enzymes supply the fungus with nutrient amino acids as well as are able to degrade the selected host's proteins involved in the immune defense. Induces host inflammatory cytokine production in a proteolytic activity-independent way. Plays a role in tissue damage during superficial infection. Moreover, acts toward human hemoglobin though limited proteolysis to generate a variety of antimicrobial hemocidins, enabling to compete with the other microorganisms of the same physiological niche using the microbicidal peptides generated from the host protein. Its function is as follows. Plays a key role in defense against host by cleaving histatin-5 (Hst 5), a peptide from human saliva that carries out fungicidal activity. The cleavage rate decreases in an order of SAP2 &gt; SAP9 &gt; SAP3 &gt; SAP7 &gt; SAP4 &gt; SAP1 &gt; SAP8. The first cleavage occurs between residues 'Lys-17' and 'His-18' of Hst 5, giving DSHAKRHHGYKRKFHEK and HHSHRGY peptides. Further fragmentation by SAP1 results in AKRHHGYKRKFHEK and AKRHHGY products. This is Secreted aspartic protease 1 from Candida albicans (strain SC5314 / ATCC MYA-2876) (Yeast).